A 339-amino-acid polypeptide reads, in one-letter code: MKLWKRAAVVLKDGPSLIAADDILTAAVVKATSHDELSIDTESAQFIYRHVLSSPSSLKPLVSLISSRVKRTRSWAVALKGLMLMHGFFLCKSTVAESIGRLPFDLSSFGEGNSRIMSKSGGFNLFVRAYFAFLDRRSILFHDGNRHRYNEESSVLIRLVIIRKMQIIVDSLIRIKPIGENMMIPVINEAMENVVSEIMEIYGWICRRIAEVLPNVHSKIGKTEADLALKIVAKSMKQGGELKKYFEFCKDLGVSNAQEIPNFVRIPEADVIHLDELVRTAMESSEESAERTEIAEEEEEEEEEIETKLSDLITLDHNEEAPASPPRVVVVDIPDLISF.

The 133-residue stretch at 16 to 148 (SLIAADDILT…ILFHDGNRHR (133 aa)) folds into the ENTH domain. Residues 283–307 (ESSEESAERTEIAEEEEEEEEEIET) are disordered. Acidic residues predominate over residues 295 to 305 (AEEEEEEEEEI).

It is found in the membrane. The protein localises to the clathrin-coated pit. It localises to the golgi apparatus. Its subcellular location is the cytoplasmic vesicle. The protein resides in the clathrin-coated vesicle. The chain is Putative clathrin assembly protein At1g14686 from Arabidopsis thaliana (Mouse-ear cress).